We begin with the raw amino-acid sequence, 271 residues long: Tropinone reductase homolog At2g29360 (271 aa).

22–46 (LVTGGSKGIGEAVVEELATLGARIH) is an NADP(+) binding site. Ser-155 is a substrate binding site. Tyr-168 acts as the Proton acceptor in catalysis.

Belongs to the short-chain dehydrogenases/reductases (SDR) family. SDR65C subfamily.

Its function is as follows. Oxidoreductase active on cyclic ketones, but not on tropinone or nortropinone. This Arabidopsis thaliana (Mouse-ear cress) protein is Tropinone reductase homolog At2g29360.